Consider the following 86-residue polypeptide: MPKSDIHPTWYPEAKVICNGEVVMTTGATQPEIQVDVWSGNHPFFTGTQKILDTEGRVDRFMRKYRMASSDSSEQKDKSSEEKKES.

Residues 65-86 (YRMASSDSSEQKDKSSEEKKES) are disordered. Residues 73 to 86 (SEQKDKSSEEKKES) show a composition bias toward basic and acidic residues.

This sequence belongs to the bacterial ribosomal protein bL31 family. Type A subfamily. As to quaternary structure, part of the 50S ribosomal subunit.

Binds the 23S rRNA. This Prochlorococcus marinus (strain NATL1A) protein is Large ribosomal subunit protein bL31.